Here is a 1537-residue protein sequence, read N- to C-terminus: MGEKLELRLKSPVGAEPAVYPWPLPVYDKHHDAAHEIIETIRWVCEEIPDLKLAMENYVLIDYDTKSFESMQRLCDKYNRAIDSIHQLWKGTTQPMKLNTRPSTGLLRHILQQVYNHSVTDPEKLNNYEPFSPEVYGETSFDLVAQMIDEIKMTDDDLFVDLGSGVGQVVLQVAAATNCKHHYGVEKADIPAKYAETMDREFRKWMKWYGKKHAEYTLERGDFLSEEWRERIANTSVIFVNNFAFGPEVDHQLKERFANMKEGGRIVSSKPFAPLNFRINSRNLSDIGTIMRVVELSPLKGSVSWTGKPVSYYLHTIDRTILENYFSSLKNPKLREEQEAARRRQQRESKSNAATPTKGPEGKVAGPADAPMDSGAEEEKAGAATVKKPSPSKARKKKLNKKGRKMAGRKRGRPKKMNTANPERKPKKNQTALDALHAQTVSQTAASSPQDAYRSPHSPFYQLPPSVQRHSPNPLLVAPTPPALQKLLESFKIQYLQFLAYTKTPQYKASLQELLGQEKEKNAQLLGAAQQLLSHCQAQKEEIRRLFQQKLDELGVKALTYNDLIQAQKEISAHNQQLREQSEQLEQDNRALRGQSLQLLKARCEELQLDWATLSLEKLLKEKQALKSQISEKQRHCLELQISIVELEKSQRQQELLQLKSCVPPDDALSLHLRGKGALGRELEPDASRLHLELDCTKFSLPHLSSMSPELSMNGQAAGYELCGVLSRPSSKQNTPQYLASPLDQEVVPCTPSHVGRPRLEKLSGLAAPDYTRLSPAKIVLRRHLSQDHTVPGRPAASELHSRAEHTKENGLPYQSPSVPGSMKLSPQDPRPLSPGALQLAGEKSSEKGLRERAYGSSGELITSLPISIPLSTVQPNKLPVSIPLASVVLPSRAERARSTPSPVLQPRDPSSTLEKQIGANAHGAGSRSLALAPAGFSYAGSVAISGALAGSPASLTPGAEPATLDESSSSGSLFATVGSRSSTPQHPLLLAQPRNSLPASPAHQLSSSPRLGGAAQGPLPEASKGDLPSDSGFSDPESEAKRRIVFTITTGAGSAKQSPSSKHSPLTASARGDCVPSHGQDSRRRGRRKRASAGTPSLSAGVSPKRRALPSVAGLFTQPSGSPLNLNSMVSNINQPLEITAISSPETSLKSSPVPYQDHDQPPVLKKERPLSQTNGAHYSPLTSDEEPGSEDEPSSARIERKIATISLESKSPPKTLENGGGLAGRKPAPAGEPVNSSKWKSTFSPISDIGLAKSADSPLQASSALSQNSLFTFRPALEEPSADAKLAAHPRKGFPGSLSGADGLSPGTNPANGCTFGGGLAADLSLHSFSDGASLPHKGPEAAGLSSPLSFPSQRGKEGSDANPFLSKRQLDGLAGLKGEGSRGKEAGEGGLPLCGPTDKTPLLSGKAAKARDREVDLKNGHNLFISAAAVPPGSLLSGPGLAPAASSAGGAASSAQTHRSFLGPFPPGPQFALGPMSLQANLGSVAGSSVLQSLFSSVPAAAGLVHVSSAATRLTNSHAMGSFSGVAGGTVGGN.

The DOT1 domain occupies 16–330; it reads EPAVYPWPLP…ILENYFSSLK (315 aa). S-adenosyl-L-methionine contacts are provided by residues 136 to 139, 159 to 168, E186, and 222 to 223; these read YGET, FVDLGSGVGQ, and DF. The residue at position 297 (S297) is a Phosphoserine. The span at 334–350 shows a compositional bias: basic and acidic residues; sequence LREEQEAARRRQQRESK. Residues 334 to 467 are disordered; sequence LREEQEAARR…SPFYQLPPSV (134 aa). S374 carries the phosphoserine modification. The segment at 391–416 is required for interaction with nucleosomes and DNA; that stretch reads PSKARKKKLNKKGRKMAGRKRGRPKK. Positions 393 to 416 are enriched in basic residues; it reads KARKKKLNKKGRKMAGRKRGRPKK. Over residues 439 to 450 the composition is skewed to polar residues; that stretch reads QTVSQTAASSPQ. S448 and S471 each carry phosphoserine. T480 carries the phosphothreonine modification. 2 positions are modified to phosphoserine: S775 and S786. Disordered stretches follow at residues 785-853, 893-912, 957-1128, and 1145-1243; these read LSQD…LRER, RAERARSTPSPVLQPRDPSS, TPGA…LNLN, and SPET…KWKS. Basic and acidic residues predominate over residues 800–809; the sequence is LHSRAEHTKE. S826 carries the phosphoserine modification. Phosphoserine; by MAPK11 is present on S834. The segment covering 844 to 853 has biased composition (basic and acidic residues); the sequence is KSSEKGLRER. Composition is skewed to polar residues over residues 899–912, 966–986, and 994–1010; these read STPSPVLQPRDPSS, DESSSSGSLFATVGSRSSTPQ, and PRNSLPASPAHQLSSSP. T900 is modified (phosphothreonine; by MAPK11). S902 is modified (phosphoserine; by MAPK11). At T984 the chain carries Phosphothreonine; by MAPK11. S997 bears the Phosphoserine mark. Phosphoserine; by MAPK11 is present on residues S1001 and S1009. Phosphoserine is present on S1035. Residues 1048-1068 show a composition bias toward polar residues; that stretch reads TITTGAGSAKQSPSSKHSPLT. Phosphoserine is present on S1093. S1104 bears the Phosphoserine; by MAPK11 mark. Over residues 1118 to 1128 the composition is skewed to polar residues; the sequence is TQPSGSPLNLN. Residues 1158 to 1171 show a composition bias toward basic and acidic residues; it reads QDHDQPPVLKKERP. Residues 1172-1184 show a composition bias toward polar residues; it reads LSQTNGAHYSPLT. A compositionally biased stretch (acidic residues) spans 1185 to 1195; the sequence is SDEEPGSEDEP. S1213 and S1246 each carry phosphoserine. The segment at 1334 to 1410 is disordered; that stretch reads GASLPHKGPE…DKTPLLSGKA (77 aa).

The protein belongs to the class I-like SAM-binding methyltransferase superfamily. DOT1 family. Interacts with MLLT10.

The protein resides in the nucleus. The enzyme catalyses L-lysyl(79)-[histone H3] + 3 S-adenosyl-L-methionine = N(6),N(6),N(6)-trimethyl-L-lysyl(79)-[histone H3] + 3 S-adenosyl-L-homocysteine + 3 H(+). Its function is as follows. Histone methyltransferase. Methylates 'Lys-79' of histone H3. Nucleosomes are preferred as substrate compared to free histones. Binds to DNA. This chain is Histone-lysine N-methyltransferase, H3 lysine-79 specific, found in Homo sapiens (Human).